Consider the following 354-residue polypeptide: tRNA N6-adenosine threonylcarbamoyltransferase (354 aa).

The Fe cation site is built by His-115 and His-119. Residues 138–142 (LVSGG), Asp-171, Gly-184, and Asn-276 each bind substrate. Fe cation is bound at residue Asp-304.

It belongs to the KAE1 / TsaD family. The cofactor is Fe(2+).

Its subcellular location is the cytoplasm. It catalyses the reaction L-threonylcarbamoyladenylate + adenosine(37) in tRNA = N(6)-L-threonylcarbamoyladenosine(37) in tRNA + AMP + H(+). In terms of biological role, required for the formation of a threonylcarbamoyl group on adenosine at position 37 (t(6)A37) in tRNAs that read codons beginning with adenine. Is involved in the transfer of the threonylcarbamoyl moiety of threonylcarbamoyl-AMP (TC-AMP) to the N6 group of A37, together with TsaE and TsaB. TsaD likely plays a direct catalytic role in this reaction. This chain is tRNA N6-adenosine threonylcarbamoyltransferase, found in Xanthomonas oryzae pv. oryzae (strain MAFF 311018).